Consider the following 449-residue polypeptide: Argininosuccinate synthase (449 aa).

ATP contacts are provided by residues 17–25 (AFSGGLDTS) and Ala43. Tyr99 provides a ligand contact to L-citrulline. Positions 129 and 131 each coordinate ATP. Residues Thr131, Asn135, and Asp136 each coordinate L-aspartate. Asn135 is an L-citrulline binding site. An ATP-binding site is contributed by Asp136. The L-citrulline site is built by Arg139 and Ser192. Asp194 is a binding site for ATP. L-citrulline-binding residues include Thr201, Glu203, and Glu280.

This sequence belongs to the argininosuccinate synthase family. Type 2 subfamily. In terms of assembly, homotetramer.

It is found in the cytoplasm. The enzyme catalyses L-citrulline + L-aspartate + ATP = 2-(N(omega)-L-arginino)succinate + AMP + diphosphate + H(+). It functions in the pathway amino-acid biosynthesis; L-arginine biosynthesis; L-arginine from L-ornithine and carbamoyl phosphate: step 2/3. The polypeptide is Argininosuccinate synthase (Dickeya dadantii (strain 3937) (Erwinia chrysanthemi (strain 3937))).